Here is a 345-residue protein sequence, read N- to C-terminus: NADPH-dependent curcumin reductase (345 aa).

Basic residues predominate over residues 1 to 10; the sequence is MGQQKQRNRR. The disordered stretch occupies residues 1-24; the sequence is MGQQKQRNRRWVLASRPHGAPVPE. NADP(+)-binding residues include lysine 186, asparagine 225, and asparagine 333.

As to quaternary structure, homodimer.

The enzyme catalyses tetrahydrocurcumin + 2 NADP(+) = curcumin + 2 NADPH + 2 H(+). It carries out the reaction tetrahydrocurcumin + NADP(+) = dihydrocurcumin + NADPH + H(+). It catalyses the reaction dihydrocurcumin + NADP(+) = curcumin + NADPH + H(+). Its activity is regulated as follows. Inhibited by thiol-specific reagents (p-chloromercuribenzoate and 5,5'-dithio-bis-2-nitrobenzoate). Catalyzes the metal-independent reduction of curcumin to dihydrocurcumin (DHC) as an intermediate product, followed by further reduction to tetrahydrocurcumin (THC) as an end product. It also acts on 3-octene-2-one, 3-hepten-2-one, resveratrol, and trans-2-octenal. The sequence is that of NADPH-dependent curcumin reductase from Escherichia coli (strain K12).